The primary structure comprises 693 residues: Phosphoribosylformylglycinamidine synthase subunit PurL (693 aa).

His-34 is an active-site residue. 2 residues coordinate ATP: Tyr-37 and Lys-76. Mg(2+) is bound at residue Glu-78. Residues 79-82 (SHNH) and Arg-101 contribute to the substrate site. His-80 (proton acceptor) is an active-site residue. Asp-102 lines the Mg(2+) pocket. Gln-222 contacts substrate. Asp-248 provides a ligand contact to Mg(2+). 292-294 (ETQ) contacts substrate. ATP-binding residues include Asp-470 and Gly-507. Ser-510 provides a ligand contact to substrate.

It belongs to the FGAMS family. As to quaternary structure, monomer. Part of the FGAM synthase complex composed of 1 PurL, 1 PurQ and 2 PurS subunits.

Its subcellular location is the cytoplasm. It catalyses the reaction N(2)-formyl-N(1)-(5-phospho-beta-D-ribosyl)glycinamide + L-glutamine + ATP + H2O = 2-formamido-N(1)-(5-O-phospho-beta-D-ribosyl)acetamidine + L-glutamate + ADP + phosphate + H(+). Its pathway is purine metabolism; IMP biosynthesis via de novo pathway; 5-amino-1-(5-phospho-D-ribosyl)imidazole from N(2)-formyl-N(1)-(5-phospho-D-ribosyl)glycinamide: step 1/2. Functionally, part of the phosphoribosylformylglycinamidine synthase complex involved in the purines biosynthetic pathway. Catalyzes the ATP-dependent conversion of formylglycinamide ribonucleotide (FGAR) and glutamine to yield formylglycinamidine ribonucleotide (FGAM) and glutamate. The FGAM synthase complex is composed of three subunits. PurQ produces an ammonia molecule by converting glutamine to glutamate. PurL transfers the ammonia molecule to FGAR to form FGAM in an ATP-dependent manner. PurS interacts with PurQ and PurL and is thought to assist in the transfer of the ammonia molecule from PurQ to PurL. The polypeptide is Phosphoribosylformylglycinamidine synthase subunit PurL (Pyrobaculum islandicum (strain DSM 4184 / JCM 9189 / GEO3)).